Consider the following 228-residue polypeptide: Cytochrome b-c1 complex subunit Rieske, mitochondrial (228 aa).

The N-terminal 26 residues, 1 to 26 (MLAKQFISKSLASSLRRLLPVSSTAS), are a transit peptide targeting the mitochondrion. Residues 27–63 (SLKGSMMTIPKFTSIRTYTDSPEMPDFSEYQTKSTGD) are Mitochondrial matrix-facing. The helical transmembrane segment at 64–93 (RSRVISYAMVGTMGALTAAGAQATVHDFLA) threads the bilayer. Residues 94–228 (SWSASADVLA…TFEGSKIIIG (135 aa)) are Mitochondrial intermembrane-facing. A Rieske domain is found at 139–227 (IQEANSVDIS…YTFEGSKIII (89 aa)). Positions 172, 174, 191, and 194 each coordinate [2Fe-2S] cluster. Cys177 and Cys193 are disulfide-bonded.

This sequence belongs to the Rieske iron-sulfur protein family. In terms of assembly, component of the ubiquinol-cytochrome c oxidoreductase (cytochrome b-c1 complex, complex III, CIII), a multisubunit enzyme composed of 3 respiratory subunits cytochrome b, cytochrome c1 and Rieske protein, 2 core protein subunits, and additional low-molecular weight protein subunits. The complex exists as an obligatory dimer and forms supercomplexes (SCs) in the inner mitochondrial membrane with cytochrome c oxidase (complex IV, CIV). It depends on [2Fe-2S] cluster as a cofactor.

The protein resides in the mitochondrion inner membrane. It carries out the reaction a quinol + 2 Fe(III)-[cytochrome c](out) = a quinone + 2 Fe(II)-[cytochrome c](out) + 2 H(+)(out). In terms of biological role, component of the ubiquinol-cytochrome c oxidoreductase, a multisubunit transmembrane complex that is part of the mitochondrial electron transport chain which drives oxidative phosphorylation. The respiratory chain contains 3 multisubunit complexes succinate dehydrogenase (complex II, CII), ubiquinol-cytochrome c oxidoreductase (cytochrome b-c1 complex, complex III, CIII) and cytochrome c oxidase (complex IV, CIV), that cooperate to transfer electrons derived from NADH and succinate to molecular oxygen, creating an electrochemical gradient over the inner membrane that drives transmembrane transport and the ATP synthase. The cytochrome b-c1 complex catalyzes electron transfer from ubiquinol to cytochrome c, linking this redox reaction to translocation of protons across the mitochondrial inner membrane, with protons being carried across the membrane as hydrogens on the quinol. In the process called Q cycle, 2 protons are consumed from the matrix, 4 protons are released into the intermembrane space and 2 electrons are passed to cytochrome c. The Rieske protein is a catalytic core subunit containing a [2Fe-2S] iron-sulfur cluster. It cycles between 2 conformational states during catalysis to transfer electrons from the quinol bound in the Q(0) site in cytochrome b to cytochrome c1. The protein is Cytochrome b-c1 complex subunit Rieske, mitochondrial (rip1) of Schizosaccharomyces pombe (strain 972 / ATCC 24843) (Fission yeast).